Consider the following 281-residue polypeptide: Pantothenate synthetase (281 aa).

An ATP-binding site is contributed by Met30–His37. Residue His37 is the Proton donor of the active site. Gln61 is a binding site for (R)-pantoate. Residue Gln61 coordinates beta-alanine. Gly147–Asp150 serves as a coordination point for ATP. Gln153 contacts (R)-pantoate. ATP-binding positions include Val176 and Met184 to Arg187.

Belongs to the pantothenate synthetase family. Homodimer.

It is found in the cytoplasm. It carries out the reaction (R)-pantoate + beta-alanine + ATP = (R)-pantothenate + AMP + diphosphate + H(+). It functions in the pathway cofactor biosynthesis; (R)-pantothenate biosynthesis; (R)-pantothenate from (R)-pantoate and beta-alanine: step 1/1. In terms of biological role, catalyzes the condensation of pantoate with beta-alanine in an ATP-dependent reaction via a pantoyl-adenylate intermediate. This is Pantothenate synthetase from Heliobacterium modesticaldum (strain ATCC 51547 / Ice1).